Consider the following 329-residue polypeptide: NAC domain-containing protein 71 (329 aa).

Positions 9 to 166 (LPPGFRFHPT…DWVLCRIYNK (158 aa)) constitute an NAC domain. The segment at 228-281 (RSGSADRDSMPRLHTDSSGSEHVLSPSPSPDDFPGGGDHDYAESQPSGGCGGWP) is disordered. A compositionally biased stretch (basic and acidic residues) spans 230–242 (GSADRDSMPRLHT).

In terms of assembly, interacts with NAC048 and NAC002. Expressed in roots and embryo. Weakly expressed in callus.

It is found in the nucleus. Its function is as follows. Transcription activator that binds to the promoter of the stress response gene LEA19. Involved in tolerance to abiotic stresses. In Oryza sativa subsp. japonica (Rice), this protein is NAC domain-containing protein 71.